Reading from the N-terminus, the 210-residue chain is ATP phosphoribosyltransferase (210 aa).

It belongs to the ATP phosphoribosyltransferase family. Short subfamily. As to quaternary structure, heteromultimer composed of HisG and HisZ subunits.

It localises to the cytoplasm. The catalysed reaction is 1-(5-phospho-beta-D-ribosyl)-ATP + diphosphate = 5-phospho-alpha-D-ribose 1-diphosphate + ATP. The protein operates within amino-acid biosynthesis; L-histidine biosynthesis; L-histidine from 5-phospho-alpha-D-ribose 1-diphosphate: step 1/9. Its function is as follows. Catalyzes the condensation of ATP and 5-phosphoribose 1-diphosphate to form N'-(5'-phosphoribosyl)-ATP (PR-ATP). Has a crucial role in the pathway because the rate of histidine biosynthesis seems to be controlled primarily by regulation of HisG enzymatic activity. In Petrotoga mobilis (strain DSM 10674 / SJ95), this protein is ATP phosphoribosyltransferase.